A 589-amino-acid polypeptide reads, in one-letter code: Aspartate--tRNA ligase (589 aa).

Glu172 is an L-aspartate binding site. The segment at 196–199 is aspartate; the sequence is QLFK. Residue Arg218 coordinates L-aspartate. ATP-binding positions include 218 to 220 and Gln227; that span reads RDE. L-aspartate is bound at residue His449. Glu483 serves as a coordination point for ATP. Arg490 contacts L-aspartate. An ATP-binding site is contributed by 535–538; that stretch reads GLDR.

The protein belongs to the class-II aminoacyl-tRNA synthetase family. Type 1 subfamily. As to quaternary structure, homodimer.

It localises to the cytoplasm. The enzyme catalyses tRNA(Asp) + L-aspartate + ATP = L-aspartyl-tRNA(Asp) + AMP + diphosphate. In terms of biological role, catalyzes the attachment of L-aspartate to tRNA(Asp) in a two-step reaction: L-aspartate is first activated by ATP to form Asp-AMP and then transferred to the acceptor end of tRNA(Asp). The polypeptide is Aspartate--tRNA ligase (Actinobacillus succinogenes (strain ATCC 55618 / DSM 22257 / CCUG 43843 / 130Z)).